Here is a 188-residue protein sequence, read N- to C-terminus: Peroxynitrite isomerase (188 aa).

The GXWXGXG signature appears at 35–41; sequence GTWRGEG. His-178 is a binding site for heme b.

The protein belongs to the nitrobindin family. In terms of assembly, homodimer. The cofactor is heme b.

The enzyme catalyses peroxynitrite = nitrate. Its pathway is nitrogen metabolism. Heme-binding protein able to scavenge peroxynitrite and to protect free L-tyrosine against peroxynitrite-mediated nitration, by acting as a peroxynitrite isomerase that converts peroxynitrite to nitrate. Therefore, this protein likely plays a role in peroxynitrite sensing and in the detoxification of reactive nitrogen and oxygen species (RNS and ROS, respectively). Is able to bind nitric oxide (NO) in vitro, but may act as a sensor of peroxynitrite levels in vivo. The polypeptide is Peroxynitrite isomerase (Frankia casuarinae (strain DSM 45818 / CECT 9043 / HFP020203 / CcI3)).